The following is a 254-amino-acid chain: Pyrroloquinoline-quinone synthase (254 aa).

The protein belongs to the PqqC family.

The enzyme catalyses 6-(2-amino-2-carboxyethyl)-7,8-dioxo-1,2,3,4,7,8-hexahydroquinoline-2,4-dicarboxylate + 3 O2 = pyrroloquinoline quinone + 2 H2O2 + 2 H2O + H(+). It participates in cofactor biosynthesis; pyrroloquinoline quinone biosynthesis. Ring cyclization and eight-electron oxidation of 3a-(2-amino-2-carboxyethyl)-4,5-dioxo-4,5,6,7,8,9-hexahydroquinoline-7,9-dicarboxylic-acid to PQQ. The polypeptide is Pyrroloquinoline-quinone synthase (Rhodopseudomonas palustris (strain TIE-1)).